A 932-amino-acid chain; its full sequence is Isoleucine--tRNA ligase (932 aa).

Positions 58–68 match the 'HIGH' region motif; that stretch reads PYANGDIHIGH. Residue E570 coordinates L-isoleucyl-5'-AMP. A 'KMSKS' region motif is present at residues 611–615; sequence KMSKS. K614 is an ATP binding site. The Zn(2+) site is built by C895, C898, C915, and C918.

This sequence belongs to the class-I aminoacyl-tRNA synthetase family. IleS type 1 subfamily. As to quaternary structure, monomer. Zn(2+) is required as a cofactor.

The protein resides in the cytoplasm. It catalyses the reaction tRNA(Ile) + L-isoleucine + ATP = L-isoleucyl-tRNA(Ile) + AMP + diphosphate. Catalyzes the attachment of isoleucine to tRNA(Ile). As IleRS can inadvertently accommodate and process structurally similar amino acids such as valine, to avoid such errors it has two additional distinct tRNA(Ile)-dependent editing activities. One activity is designated as 'pretransfer' editing and involves the hydrolysis of activated Val-AMP. The other activity is designated 'posttransfer' editing and involves deacylation of mischarged Val-tRNA(Ile). This chain is Isoleucine--tRNA ligase, found in Dechloromonas aromatica (strain RCB).